Consider the following 290-residue polypeptide: tRNA(Ile)-lysidine synthase, chloroplastic (290 aa).

An ATP-binding site is contributed by 33–38 (SGGQDS).

This sequence belongs to the tRNA(Ile)-lysidine synthase family.

Its subcellular location is the plastid. The protein localises to the chloroplast. It carries out the reaction cytidine(34) in tRNA(Ile2) + L-lysine + ATP = lysidine(34) in tRNA(Ile2) + AMP + diphosphate + H(+). Functionally, ligates lysine onto the cytidine present at position 34 of the AUA codon-specific tRNA(Ile) that contains the anticodon CAU, in an ATP-dependent manner. Cytidine is converted to lysidine, thus changing the amino acid specificity of the tRNA from methionine to isoleucine. This Cyanidioschyzon merolae (strain NIES-3377 / 10D) (Unicellular red alga) protein is tRNA(Ile)-lysidine synthase, chloroplastic.